Reading from the N-terminus, the 839-residue chain is MAQFDTEYQRLEASYSDSPPGEEDLLVHVPEGSKSPWHHIENLDLFFSRVYNLHQKNGFTCMLIGEIFELMQFLFVVAFTTFLVSCVDYDILFANKMVNHSLHPTEPVKVTLPDAFLPAQVCSARIQENGSLITILVIAGVFWVHRLIKFIYNICCYWEIHSFYLHALRIPMSALPYCTWQEVQARIVQTQKEHQICIHKRELTELDIYHRILRFQNYMVALVNKSLLPLRFRLPGLGEVVFFTRGLKYNFELILFWGPGSLFLNEWSLKAEYKRGGQRLELAQRLSNRILWIGIANFLLCPLILIWQILYAFFSYAEVLKREPGALGARCWSLYGRCYLRHFNELEHELQSRLNRGYKPASKYMNCFLSPLLTLLAKNCAFFAGSILAVLIALTIYDEDVLAVEHVLTTVTLLGVTVTVCRSFIPDQHMVFCPEQLLRVILAHIHYMPDHWQGNAHRSQTRDEFAQLFQYKAVFILEELLSPIVTPLILIFCLRPRALEIIDFFRNFTVEVVGVGDTCSFAQMDVRQHGHPQWLSGGQTEASVYQQAEDGKTELSLMHFAITNPGWQPPRESTAFLGFLKEQVQRDGAAAGLAQGGLLPENALFTSIQSLQSESEPLSLIANVVAGSSCRGPPLPRDLQGSRHRAEVASALRSFSPLQPGQAPTGRAPSTMTGSGVDARTASSGSSVWEGQLQSLVLSEYASTEMSLHALYMHQLHKQQAQAEPERHVWHRRESDESGESAPEEGGEGARATQPIPRSASYPCAAPRPGAPETTALQGGFQRRYGGITDPGTVPRAPSHFSRLPLGGWAEDGQSASRHPEPVPEEGSEDELPPQVHKV.

Residues 1–21 are disordered; it reads MAQFDTEYQRLEASYSDSPPG. A2 carries the N-acetylalanine modification. Residues 2-61 lie on the Cytoplasmic side of the membrane; sequence AQFDTEYQRLEASYSDSPPGEEDLLVHVPEGSKSPWHHIENLDLFFSRVYNLHQKNGFTC. Residues 8-11 carry the Tyrosine-based sorting signal motif; it reads YQRL. Residues S14, S16, and S18 each carry the phosphoserine modification. Residues 62–84 traverse the membrane as a helical segment; that stretch reads MLIGEIFELMQFLFVVAFTTFLV. Topologically, residues 85-128 are lumenal; sequence SCVDYDILFANKMVNHSLHPTEPVKVTLPDAFLPAQVCSARIQE. N99 carries N-linked (GlcNAc...) asparagine glycosylation. The chain crosses the membrane as a helical span at residues 129–154; it reads NGSLITILVIAGVFWVHRLIKFIYNI. Over 155–290 the chain is Cytoplasmic; it reads CCYWEIHSFY…ELAQRLSNRI (136 aa). An intramembrane segment occupies 291–301; sequence LWIGIANFLLC. Topologically, residues 302-319 are cytoplasmic; that stretch reads PLILIWQILYAFFSYAEV. The stretch at 320–328 is an intramembrane region; it reads LKREPGALG. At 329 to 371 the chain is on the cytoplasmic side; that stretch reads ARCWSLYGRCYLRHFNELEHELQSRLNRGYKPASKYMNCFLSP. The helical transmembrane segment at 372–397 threads the bilayer; that stretch reads LLTLLAKNCAFFAGSILAVLIALTIY. The Lumenal segment spans residues 398-406; it reads DEDVLAVEH. A helical transmembrane segment spans residues 407–424; it reads VLTTVTLLGVTVTVCRSF. The Cytoplasmic portion of the chain corresponds to 425-470; the sequence is IPDQHMVFCPEQLLRVILAHIHYMPDHWQGNAHRSQTRDEFAQLFQ. The stretch at 471-480 is an intramembrane region; the sequence is YKAVFILEEL. The Cytoplasmic portion of the chain corresponds to 481–483; the sequence is LSP. The stretch at 484 to 492 is an intramembrane region; sequence IVTPLILIF. Topologically, residues 493 to 839 are cytoplasmic; it reads CLRPRALEII…DELPPQVHKV (347 aa). S656, S735, S738, S741, and S828 each carry phosphoserine. Disordered regions lie at residues 656–688 and 719–839; these read SPLQ…GSSV and QQAQ…VHKV. The span at 724 to 736 shows a compositional bias: basic and acidic residues; sequence EPERHVWHRRESD. Acidic residues-rich tracts occupy residues 737 to 747 and 823 to 832; these read ESGESAPEEGG and VPEEGSEDEL.

The protein belongs to the ATG9 family. As to quaternary structure, homotrimer; forms a homotrimer with a central pore that forms a path between the two membrane leaflets. Interacts (via cytoplasmic its C-terminus) with ATG2A. Interacts with SUPT20H. Interacts (via the tyrosine-based sorting signal motif) with AP4M1; promoting association with the AP-4 complex. Interacts with ARFIP1 and ARFIP2. Interacts with PI4K2A and PI4KB. Interacts with ATG4A; the interaction is direct and promotes ATG9A trafficking. Ufmylated in a DDRGK1 dependent manner.

The protein resides in the preautophagosomal structure membrane. It is found in the cytoplasmic vesicle. The protein localises to the autophagosome membrane. It localises to the golgi apparatus. Its subcellular location is the trans-Golgi network membrane. The protein resides in the late endosome membrane. It is found in the recycling endosome membrane. The protein localises to the endoplasmic reticulum membrane. It localises to the mitochondrion membrane. It catalyses the reaction a 1,2-diacyl-sn-glycero-3-phosphocholine(in) = a 1,2-diacyl-sn-glycero-3-phosphocholine(out). It carries out the reaction a 1,2-diacyl-sn-glycero-3-phospho-L-serine(in) = a 1,2-diacyl-sn-glycero-3-phospho-L-serine(out). The enzyme catalyses a 1,2-diacyl-sn-glycero-3-phosphoethanolamine(in) = a 1,2-diacyl-sn-glycero-3-phosphoethanolamine(out). Its function is as follows. Phospholipid scramblase involved in autophagy by mediating autophagosomal membrane expansion. Cycles between the preautophagosomal structure/phagophore assembly site (PAS) and the cytoplasmic vesicle pool and supplies membrane for the growing autophagosome. Lipid scramblase activity plays a key role in preautophagosomal structure/phagophore assembly by distributing the phospholipids that arrive through ATG2 (ATG2A or ATG2B) from the cytoplasmic to the luminal leaflet of the bilayer, thereby driving autophagosomal membrane expansion. Also required to supply phosphatidylinositol 4-phosphate to the autophagosome initiation site by recruiting the phosphatidylinositol 4-kinase beta (PI4KB) in a process dependent on ARFIP2, but not ARFIP1. In addition to autophagy, also plays a role in necrotic cell death. In Bos taurus (Bovine), this protein is Autophagy-related protein 9A.